A 170-amino-acid polypeptide reads, in one-letter code: uncharacterized protein (170 aa).

3 helical membrane passes run 6–26 (PFYF…ILLI), 31–51 (LLFI…LIYI), and 91–111 (IYFS…IVAF).

It to M.jannaschii MJ1249.1, MJ0210.1 and MJ0785.1.

Its subcellular location is the cell membrane. This is an uncharacterized protein from Methanocaldococcus jannaschii (strain ATCC 43067 / DSM 2661 / JAL-1 / JCM 10045 / NBRC 100440) (Methanococcus jannaschii).